The chain runs to 1038 residues: Type I restriction enzyme EcoR124I/EcoR124II endonuclease subunit (1038 aa).

The nuclease domain stretch occupies residues 31–249 (QSESDLEREL…LKDFTATCFQ (219 aa)). The interval 250–469 (KHTLLNVLVN…SYVITDAIRD (220 aa)) is motor 1 domain. A Helicase ATP-binding domain is found at 294–439 (KNWSKPESGG…YQFGFTGTPI (146 aa)). 307–314 (HTTGSGKT) contacts ATP. The DEAH box motif lies at 408–411 (DECH). The motor 2 domain stretch occupies residues 470–702 (EKVLKFKVDY…YDATKTFGNI (233 aa)). Residues 720 to 732 (GDKNTKNVVLEKS) form a motor 2-helicase linker region. The tract at residues 732–860 (SYTEYMEGFT…NDIRDWQRRE (129 aa)) is helicase domain. Positions 859-886 (REKEAEKKEKSTTDWDDVVFEVDLLKSQ) are helicase-CTD linker. The segment at 886–1038 (QEINLDYILG…EKFKGVGGKI (153 aa)) is C-terminal domain.

Belongs to the HsdR family. As to quaternary structure, a monomer in solution. The type I restriction/modification system is composed of three polypeptides R, M and S; the restriction enzyme has stoichiometry R(2)M(2)S(1) while the methyltransferase is M(2)S(1). There is an equilibrium between R(2)M(2)S(1) and R(1)M(2)S(1); the latter is methylation and translocation proficient but restriction deficient. In terms of assembly, (Microbial infection) Holoenenzyme interacts with Escherichia phage T7 protein Ocr; this interaction leads to the inhibition of the restriction activity, but may still allow methylation and translocation.

The enzyme catalyses Endonucleolytic cleavage of DNA to give random double-stranded fragments with terminal 5'-phosphates, ATP is simultaneously hydrolyzed.. The restriction (R) subunit of a type I restriction enzyme that recognizes 5'-GAAN(6)RTCG-3' (for EcoR124I) and 5'-GAAN(7)RTCG-3' (for EcoR124II) and cleaves a random distance away. Subunit R is required for both nuclease and ATPase activities, but not for modification. After locating an unmethylated recognition site, the enzyme complex serves as a molecular motor that translocates DNA in an ATP-dependent manner until a collision occurs that triggers cleavage. The enzyme undergoes major structural changes to bring the motor domains into contact with DNA, allowing DNA translocation. This prevents DNA access to the catalytic domains of both the R and M subunits, preventing both restriction and methylation. The R(1)M(2)S(1) complex translocates an average of 555 bp/second on nicked DNA; the R(2)M(2)S(1) complex translocates at double that speed. The 2 R subunit motors are independent and track along the helical pitch of the DNA, inducing positive supercoiling ahead of themselves. This is Type I restriction enzyme EcoR124I/EcoR124II endonuclease subunit from Escherichia coli.